The following is a 491-amino-acid chain: uncharacterized protein (491 aa).

Helical transmembrane passes span 48–68, 85–105, 112–132, 140–160, 174–194, 202–222, 277–297, 317–337, 358–378, 383–403, 408–428, and 455–475; these read LILV…VAPC, ALIL…SAPL, RMLL…CGLA, IFRF…SGTI, AVMS…SGFI, WIFW…LPLL, PIVI…YLVL, LNYI…GIFI, VPVI…YGWT, THWI…MLGW, TYLI…ACCV, and LLAF…WFGG.

Belongs to the major facilitator superfamily.

It localises to the membrane. This is an uncharacterized protein from Schizosaccharomyces pombe (strain 972 / ATCC 24843) (Fission yeast).